The following is a 342-amino-acid chain: N-acetyl-gamma-glutamyl-phosphate reductase (342 aa).

Residue C148 is part of the active site.

This sequence belongs to the NAGSA dehydrogenase family. Type 1 subfamily.

It localises to the cytoplasm. The enzyme catalyses N-acetyl-L-glutamate 5-semialdehyde + phosphate + NADP(+) = N-acetyl-L-glutamyl 5-phosphate + NADPH + H(+). The protein operates within amino-acid biosynthesis; L-arginine biosynthesis; N(2)-acetyl-L-ornithine from L-glutamate: step 3/4. Functionally, catalyzes the NADPH-dependent reduction of N-acetyl-5-glutamyl phosphate to yield N-acetyl-L-glutamate 5-semialdehyde. This Methanococcus vannielii (strain ATCC 35089 / DSM 1224 / JCM 13029 / OCM 148 / SB) protein is N-acetyl-gamma-glutamyl-phosphate reductase.